The primary structure comprises 767 residues: Glucoamylase S1 (767 aa).

The first 21 residues, 1-21 (MQRPFLLAYLVLSLLFNSALG), serve as a signal peptide directing secretion. Disordered stretches follow at residues 29–83 (RGSS…ETTI) and 125–149 (TTTV…PTTP). A compositionally biased stretch (low complexity) spans 30–48 (GSSSSNITSSGPSSTPFSS). N35 is a glycosylation site (N-linked (GlcNAc...) asparagine). A compositionally biased stretch (polar residues) spans 49–66 (ATESFSTGTTVTPSSSKY). Low complexity-rich tracts occupy residues 71–83 (TETS…ETTI) and 131–149 (STSP…PTTP). 5 N-linked (GlcNAc...) asparagine glycosylation sites follow: N308, N322, N414, N423, and N434. The interval 348-691 (VSIERIFENI…ASTTLYQLIY (344 aa)) is h subunit. W455 is a substrate binding site. A glycan (N-linked (GlcNAc...) asparagine) is linked at N513. The active-site Proton acceptor is the D518. E521 (proton donor) is an active-site residue. 5 N-linked (GlcNAc...) asparagine glycosylation sites follow: N546, N645, N650, N720, and N741. The interval 692-767 (RHISEQHDLV…LKATWEQTGN (76 aa)) is y subunit.

This sequence belongs to the glycosyl hydrolase 15 family.

It catalyses the reaction Hydrolysis of terminal (1-&gt;4)-linked alpha-D-glucose residues successively from non-reducing ends of the chains with release of beta-D-glucose.. The sequence is that of Glucoamylase S1 (STA1) from Saccharomyces cerevisiae (Baker's yeast).